Here is a 207-residue protein sequence, read N- to C-terminus: Guanylate kinase (207 aa).

One can recognise a Guanylate kinase-like domain in the interval 4-184; it reads GTLYIVSAPS…ALLDLKTIIR (181 aa). 11-18 is an ATP binding site; the sequence is APSGAGKS.

Belongs to the guanylate kinase family.

It is found in the cytoplasm. It carries out the reaction GMP + ATP = GDP + ADP. In terms of biological role, essential for recycling GMP and indirectly, cGMP. The sequence is that of Guanylate kinase from Sodalis glossinidius (strain morsitans).